Reading from the N-terminus, the 233-residue chain is Riboflavin kinase (233 aa).

Residues 1-104 (MVRDIKTFKF…YKKIFDDEGT (104 aa)) form an H-T-H motif-like region. Positions 105 to 233 (IKIKGEVFSG…GDFVEVEVIL (129 aa)) are riboflavin kinase. Residue 114 to 119 (GVGEGR) coordinates CDP. Mg(2+) is bound by residues Thr-143 and Asn-145. Residues Thr-200 and Glu-208 each coordinate FMN. 213-216 (VKLR) provides a ligand contact to CDP.

It belongs to the archaeal riboflavin kinase family. Mg(2+) is required as a cofactor.

The catalysed reaction is riboflavin + CTP = CDP + FMN + H(+). It functions in the pathway cofactor biosynthesis; FMN biosynthesis; FMN from riboflavin (CTP route): step 1/1. In terms of biological role, catalyzes the CTP-dependent phosphorylation of riboflavin (vitamin B2) to form flavin mononucleotide (FMN). The sequence is that of Riboflavin kinase (ribK) from Archaeoglobus fulgidus (strain ATCC 49558 / DSM 4304 / JCM 9628 / NBRC 100126 / VC-16).